A 1733-amino-acid chain; its full sequence is Probable nuclear antigen (1733 aa).

Disordered stretches follow at residues 1 to 41, 71 to 394, 437 to 506, 520 to 548, 882 to 907, 993 to 1141, 1223 to 1242, 1348 to 1475, 1585 to 1608, and 1630 to 1665; these read MNLF…THFT, PHPP…EQQV, AGAG…EGAQ, APAAAGDEDGPQRGAEPPAVGRAVPEGGA, LGGGGGGGQQRGSGVRSGPESEGAAL, AGGP…EDAA, PERVLGGHGVPDVRQRRGHA, GAGP…GRAG, SGGGGAAAAGRRDRPGGGGGWGSG, and PRRRPGLTDRVPPRGGPSPRGCRGAGRAGGGGRGGC. The span at 21 to 31 shows a compositional bias: basic residues; sequence DHHHQQHHHHP. Residues 77–97 show a composition bias toward basic and acidic residues; it reads PQDHHRPTPARDHRDPRDHLP. Residues 113 to 131 are compositionally biased toward low complexity; sequence TTTTTIKDPQHPQDPLLLP. Basic and acidic residues predominate over residues 135–147; that stretch reads LQEEDPHLLRPTR. A compositionally biased stretch (pro residues) spans 179–189; the sequence is GGGPPSPPPRP. A compositionally biased stretch (low complexity) spans 190 to 201; that stretch reads STSSSSSHQGPP. Residues 202–220 are compositionally biased toward pro residues; that stretch reads STRPPPPQRPPPRWPPPSP. A compositionally biased stretch (polar residues) spans 227–240; it reads RAGSENTAQTLFSH. Over residues 272-299 the composition is skewed to pro residues; it reads PPPSPPPRPPPPLPPPPPPPPPPQPPPA. Over residues 316-326 the composition is skewed to basic residues; the sequence is GGRRRGGKRRR. Residues 336-354 show a composition bias toward acidic residues; the sequence is DAEEEEDGDGDEDEDEDRA. Residues 355 to 364 are compositionally biased toward basic and acidic residues; that stretch reads EGEGREDGGE. 3 stretches are compositionally biased toward gly residues: residues 365–374, 454–466, and 479–494; these read GPRGAGGGAG, GAPGGGADAGLEG, and GGDGARGQHQRGGLGV. The segment covering 495 to 506 has biased composition (low complexity); that stretch reads GLQQRRGAEGAQ. Over residues 882 to 892 the composition is skewed to gly residues; it reads LGGGGGGGQQR. Positions 893-907 are enriched in low complexity; that stretch reads GSGVRSGPESEGAAL. Composition is skewed to gly residues over residues 993 to 1004 and 1027 to 1043; these read AGGPGAGEAGGG and AGRGLRGPGPRGGLGEP. Composition is skewed to basic and acidic residues over residues 1078–1087 and 1100–1112; these read GAGDEGDRVR and RVAEREQRGRHLL. Positions 1116-1127 are enriched in gly residues; the sequence is GPEGGRGAGGRG. Gly residues predominate over residues 1385 to 1407; it reads GPGGLRGRGRGGRGGGGGGGGRG. Basic residues-rich tracts occupy residues 1408 to 1420 and 1444 to 1453; these read PRGRGGRRRRRWR and RGGRGGRGGR. Residues 1454–1474 show a composition bias toward gly residues; that stretch reads GRGGGRAPRGGGGGPGGGGRA. Gly residues predominate over residues 1652-1665; it reads RGAGRAGGGGRGGC.

The sequence is that of Probable nuclear antigen from Sus scrofa (Pig).